The chain runs to 103 residues: Co-chaperonin GroES (103 aa).

The protein belongs to the GroES chaperonin family. In terms of assembly, heptamer of 7 subunits arranged in a ring. Interacts with the chaperonin GroEL.

It is found in the cytoplasm. Its function is as follows. Together with the chaperonin GroEL, plays an essential role in assisting protein folding. The GroEL-GroES system forms a nano-cage that allows encapsulation of the non-native substrate proteins and provides a physical environment optimized to promote and accelerate protein folding. GroES binds to the apical surface of the GroEL ring, thereby capping the opening of the GroEL channel. The chain is Co-chaperonin GroES from Synechococcus sp. (strain JA-2-3B'a(2-13)) (Cyanobacteria bacterium Yellowstone B-Prime).